The sequence spans 87 residues: Small ribosomal subunit protein bS20 (87 aa).

Residues 1–26 (MANIKSAKKRAIQAEKARKHNASRRS) form a disordered region.

Belongs to the bacterial ribosomal protein bS20 family.

Functionally, binds directly to 16S ribosomal RNA. This is Small ribosomal subunit protein bS20 from Tolumonas auensis (strain DSM 9187 / NBRC 110442 / TA 4).